Reading from the N-terminus, the 468-residue chain is 3-isopropylmalate dehydratase large subunit (468 aa).

[4Fe-4S] cluster is bound by residues Cys-347, Cys-407, and Cys-410.

Belongs to the aconitase/IPM isomerase family. LeuC type 1 subfamily. As to quaternary structure, heterodimer of LeuC and LeuD. The cofactor is [4Fe-4S] cluster.

The enzyme catalyses (2R,3S)-3-isopropylmalate = (2S)-2-isopropylmalate. Its pathway is amino-acid biosynthesis; L-leucine biosynthesis; L-leucine from 3-methyl-2-oxobutanoate: step 2/4. Its function is as follows. Catalyzes the isomerization between 2-isopropylmalate and 3-isopropylmalate, via the formation of 2-isopropylmaleate. The chain is 3-isopropylmalate dehydratase large subunit from Rippkaea orientalis (strain PCC 8801 / RF-1) (Cyanothece sp. (strain PCC 8801)).